A 508-amino-acid polypeptide reads, in one-letter code: Carboxypeptidase Y homolog ARB_05721 (508 aa).

The signal sequence occupies residues 1–25; sequence MELYLNMLSFWYILLATSFFGPSQA. N-linked (GlcNAc...) asparagine glycosylation is found at N132 and N169. S204 is a catalytic residue. N268 is a glycosylation site (N-linked (GlcNAc...) asparagine). Cystine bridges form between C282–C305, C289–C298, and C332–C338. D410 is a catalytic residue. Residue C413 participates in substrate binding. An N-linked (GlcNAc...) asparagine glycan is attached at N451. H484 is a catalytic residue. Residue M485 coordinates substrate.

It belongs to the peptidase S10 family.

The protein localises to the secreted. It catalyses the reaction Release of a C-terminal amino acid with broad specificity.. In terms of biological role, involved in degradation of small peptides. The chain is Carboxypeptidase Y homolog ARB_05721 from Arthroderma benhamiae (strain ATCC MYA-4681 / CBS 112371) (Trichophyton mentagrophytes).